Consider the following 2085-residue polypeptide: Protein MLP1 homolog (2085 aa).

Coiled coils occupy residues 44-367, 399-513, 568-630, 675-1205, 1232-1667, and 1744-1799; these read KIRE…SHDG, KATQ…HVLI, YELQ…RMKS, ANEA…KRTQ, LRRE…LQQE, and EIEA…AAKE. The interval 365 to 398 is disordered; that stretch reads HDGVPGSVPQTPRANGSLLARPSSPFGTPASLRG. The disordered stretch occupies residues 934 to 953; the sequence is AERLRPLPTPRAPAAAEQPS. The Nuclear localization signal signature appears at 1159 to 1166; the sequence is ERRQRLEQ. The segment covering 1482-1503 has biased composition (polar residues); sequence LATATEKNTSLQQQLAASSTEQ. Disordered regions lie at residues 1482–1514 and 1567–1591; these read LATA…AAPS and SGGD…DEER. Low complexity predominate over residues 1504 to 1514; it reads PAAAPVSAAPS. Residues 1574 to 1584 show a composition bias toward polar residues; that stretch reads AETSVSAQPSA. A disordered region spans residues 1816–2085; the sequence is KPPAPAQAPA…GGGGGGGGNQ (270 aa). Pro residues predominate over residues 1817-1827; it reads PPAPAQAPAPA. Low complexity-rich tracts occupy residues 1843–1858, 1910–1974, and 1982–1994; these read VAPA…QAPS, QAGQ…PVPA, and ARTA…AGPR. The segment covering 1995–2016 has biased composition (gly residues); it reads GARGGRGGGFVGAGRGAGGAAG. Residues 2028–2040 show a composition bias toward low complexity; it reads GGATATAAAAAAA. Composition is skewed to gly residues over residues 2041–2051 and 2076–2085; these read GGAGGSAGAGN and GGGGGGGGNQ.

As to quaternary structure, the nuclear pore complex (NPC) constitutes the exclusive means of nucleocytoplasmic transport. NPCs allow the passive diffusion of ions and small molecules and the active, nuclear transport receptor-mediated bidirectional transport of macromolecules such as proteins, RNAs, ribonucleoparticles (RNPs), and ribosomal subunits across the nuclear envelope. The 55-60 MDa NPC is composed of at least 28 different subunits: AMO1, ELYS, GLE1, GLE2, MLP1, NDC1, NIC96, NSP1, NUP133, NUP145, NUP152, NUP159, NUP170, NUP188, NUP192, NUP37, NUP49, NUP53, NUP56, NUP57, NUP82, NUP84, NUP85, POM152, POM33, POM34, SEC13 and SEH1. Due to its 8-fold rotational symmetry, all subunits are present with 8 copies or multiples thereof.

Its subcellular location is the nucleus. Involved in the structural and functional organization of perinuclear chromatin. Associates with the nuclear pore complex and form filamentous structures along the nuclear periphery. In Chaetomium thermophilum (strain DSM 1495 / CBS 144.50 / IMI 039719) (Thermochaetoides thermophila), this protein is Protein MLP1 homolog (MLP1).